A 156-amino-acid polypeptide reads, in one-letter code: Transcription factor MafK (156 aa).

Residues methionine 1–alanine 21 are disordered. Residues arginine 51 to lysine 76 are basic motif. Positions arginine 51–leucine 114 constitute a bZIP domain. The tract at residues leucine 79–leucine 93 is leucine-zipper.

It belongs to the bZIP family. Maf subfamily. As to quaternary structure, homodimer or heterodimer.

It is found in the nucleus. Its function is as follows. Since they lack a putative transactivation domain, the small Mafs behave as transcriptional repressors when they dimerize among themselves. However, they act as transcriptional activators by dimerizing with other (usually larger) basic-zipper proteins and recruiting them to specific DNA-binding sites. Small Maf proteins heterodimerize with Fos and may act as competitive repressors of the NF-E2 transcription factor. The sequence is that of Transcription factor MafK (MAFK) from Gallus gallus (Chicken).